The following is a 153-amino-acid chain: Histone H2B.6 (153 aa).

Basic and acidic residues-rich tracts occupy residues 1–28 (MAPK…EKAP) and 36–53 (EKRL…EGKK). Residues 1 to 60 (MAPKAEKKPAAKKPAEEEPAAEKAEKAPAGKKPKAEKRLPAGKGEKGSGEGKKAGRKKGK) are disordered. N6-acetyllysine occurs at positions 7 and 37. Residue lysine 149 forms a Glycyl lysine isopeptide (Lys-Gly) (interchain with G-Cter in ubiquitin) linkage.

The protein belongs to the histone H2B family. As to quaternary structure, the nucleosome is a histone octamer containing two molecules each of H2A, H2B, H3 and H4 assembled in one H3-H4 heterotetramer and two H2A-H2B heterodimers. The octamer wraps approximately 147 bp of DNA. Post-translationally, can be acetylated to form H2BK6ac and H2BK33ac. In terms of processing, monoubiquitinated by BRE1 to form H2BK143ub1 and deubiquitinated by UBP26. Required for heterochromatic histone H3 di- and trimethylation at H3K4me. May give a specific tag for epigenetic transcriptional activation.

It is found in the nucleus. Its subcellular location is the chromosome. Its function is as follows. Core component of nucleosome. Nucleosomes wrap and compact DNA into chromatin, limiting DNA accessibility to the cellular machineries which require DNA as a template. Histones thereby play a central role in transcription regulation, DNA repair, DNA replication and chromosomal stability. DNA accessibility is regulated via a complex set of post-translational modifications of histones, also called histone code, and nucleosome remodeling. This chain is Histone H2B.6 (H2B.6), found in Oryza sativa subsp. japonica (Rice).